We begin with the raw amino-acid sequence, 362 residues long: 2-aminoethylphosphonate--pyruvate transaminase (362 aa).

Position 193 is an N6-(pyridoxal phosphate)lysine (lysine 193).

It belongs to the class-V pyridoxal-phosphate-dependent aminotransferase family. PhnW subfamily. As to quaternary structure, homodimer. Requires pyridoxal 5'-phosphate as cofactor.

The catalysed reaction is (2-aminoethyl)phosphonate + pyruvate = phosphonoacetaldehyde + L-alanine. Involved in phosphonate degradation. This is 2-aminoethylphosphonate--pyruvate transaminase from Phocaeicola vulgatus (strain ATCC 8482 / DSM 1447 / JCM 5826 / CCUG 4940 / NBRC 14291 / NCTC 11154) (Bacteroides vulgatus).